A 63-amino-acid polypeptide reads, in one-letter code: Cecropin-2 (63 aa).

A signal peptide spans 1 to 23 (MNFYKVFIFVALILAISLGQSEA). Residue Arg-62 is modified to Arginine amide.

It belongs to the cecropin family.

It is found in the secreted. Functionally, cecropins have lytic and antibacterial activity against several Gram-positive and Gram-negative bacteria. This Drosophila virilis (Fruit fly) protein is Cecropin-2 (Cec2A).